Consider the following 187-residue polypeptide: MNLQHHFLIAMPSLQDPLFKRSVVYICEHNSDGAMGIVINKPVEQFTVENVLHKLKIMPADRDPAIRLDKPVFAGGPLADDRGFILHTPRDGFGSSIGISPQTMITTSKDVLETLGTADQPDDVLVALGYSGWEQGKLERELMENAWLTTPADSEILFHTPIASRWREAAKTLGIDIHNIANQAGHA.

It belongs to the UPF0301 (AlgH) family.

This Sodalis glossinidius (strain morsitans) protein is UPF0301 protein SG2023.